Reading from the N-terminus, the 455-residue chain is Chromosomal replication initiator protein DnaA (455 aa).

A domain I, interacts with DnaA modulators region spans residues 1–74; that stretch reads MFNFEKFWQH…IQSAYGYAGV (74 aa). The domain II stretch occupies residues 74 to 117; the sequence is VELLPVFQISEDSDTPERIVTPEPQHNLQTTPTRAPQREFAKDL. Positions 118 to 334 are domain III, AAA+ region; the sequence is KLNEKYTFDN…GALVKVQAYA (217 aa). Positions 162, 164, 165, and 166 each coordinate ATP. The segment at 335–455 is domain IV, binds dsDNA; the sequence is TIEKADIDIN…VFDLKQMLEH (121 aa).

The protein belongs to the DnaA family. Oligomerizes as a right-handed, spiral filament on DNA at oriC.

The protein resides in the cytoplasm. Functionally, plays an essential role in the initiation and regulation of chromosomal replication. ATP-DnaA binds to the origin of replication (oriC) to initiate formation of the DNA replication initiation complex once per cell cycle. Binds the DnaA box (a 9 base pair repeat at the origin) and separates the double-stranded (ds)DNA. Forms a right-handed helical filament on oriC DNA; dsDNA binds to the exterior of the filament while single-stranded (ss)DNA is stabiized in the filament's interior. The ATP-DnaA-oriC complex binds and stabilizes one strand of the AT-rich DNA unwinding element (DUE), permitting loading of DNA polymerase. After initiation quickly degrades to an ADP-DnaA complex that is not apt for DNA replication. Binds acidic phospholipids. The chain is Chromosomal replication initiator protein DnaA from Lactobacillus acidophilus (strain ATCC 700396 / NCK56 / N2 / NCFM).